Reading from the N-terminus, the 526-residue chain is Ubiquitin carboxyl-terminal hydrolase 17-like protein A (526 aa).

Residues 1 to 21 are disordered; the sequence is MVVALSFPEADPALSSPDAPE. The region spanning 51-348 is the USP domain; it reads CGLQNTGNSC…NAYVLFYVQQ (298 aa). The active-site Nucleophile is the cysteine 60. Histidine 307 (proton acceptor) is an active-site residue. Residues 374 to 385 are compositionally biased toward basic residues; that stretch reads KKSRRKKHKKKS. Disordered regions lie at residues 374 to 394 and 465 to 494; these read KKSR…LGEP and RSTA…SQGP. Residues 473-486 show a composition bias toward basic and acidic residues; it reads DSPDKENQPLHNAD.

This sequence belongs to the peptidase C19 family. Post-translationally, polyubiquitinated; ubiquitination leads to its subsequent degradation. Expressed in hematopoietic progenitor cell lines Ba/F3 and FDCP1. Not detected in brain, lung, liver, kidney, thymus, spleen and bone marrow.

The catalysed reaction is Thiol-dependent hydrolysis of ester, thioester, amide, peptide and isopeptide bonds formed by the C-terminal Gly of ubiquitin (a 76-residue protein attached to proteins as an intracellular targeting signal).. In terms of biological role, deubiquitinating enzyme that removes conjugated ubiquitin from specific proteins to regulate different cellular processes. Has deubiquitinating enzyme activity for DNAH5, suggesting a role in the regulation of DNAH5 degradation by the ubiquitin-proteasome pathway. Has growth-suppressing activity; induces arrest in G1 phase upon controlled expression. This Mus musculus (Mouse) protein is Ubiquitin carboxyl-terminal hydrolase 17-like protein A (Usp17la).